The primary structure comprises 378 residues: Protein RecA (378 aa).

Positions 1–20 are disordered; it reads MAAKKDKSVPDSKITDKEGK. Residue 80–87 coordinates ATP; it reads GAESSGKT. Positions 344 to 378 are disordered; that stretch reads GPVDKKKKKSKKEASSDDTDDENLEIDDAIDENND. The segment covering 359-378 has biased composition (acidic residues); it reads SDDTDDENLEIDDAIDENND.

Belongs to the RecA family.

The protein resides in the cytoplasm. Can catalyze the hydrolysis of ATP in the presence of single-stranded DNA, the ATP-dependent uptake of single-stranded DNA by duplex DNA, and the ATP-dependent hybridization of homologous single-stranded DNAs. It interacts with LexA causing its activation and leading to its autocatalytic cleavage. In Fusobacterium nucleatum subsp. nucleatum (strain ATCC 25586 / DSM 15643 / BCRC 10681 / CIP 101130 / JCM 8532 / KCTC 2640 / LMG 13131 / VPI 4355), this protein is Protein RecA.